The primary structure comprises 136 residues: Large ribosomal subunit protein uL16 (136 aa).

Belongs to the universal ribosomal protein uL16 family. As to quaternary structure, part of the 50S ribosomal subunit.

Functionally, binds 23S rRNA and is also seen to make contacts with the A and possibly P site tRNAs. The polypeptide is Large ribosomal subunit protein uL16 (Yersinia enterocolitica serotype O:8 / biotype 1B (strain NCTC 13174 / 8081)).